The sequence spans 365 residues: 3-dehydroquinate synthase (365 aa).

NAD(+) is bound by residues 95–99, 119–120, lysine 132, and lysine 141; these read GVVGD and TT. Zn(2+) contacts are provided by glutamate 174, histidine 238, and histidine 255.

This sequence belongs to the sugar phosphate cyclases superfamily. Dehydroquinate synthase family. Requires Co(2+) as cofactor. Zn(2+) serves as cofactor. The cofactor is NAD(+).

It localises to the cytoplasm. The catalysed reaction is 7-phospho-2-dehydro-3-deoxy-D-arabino-heptonate = 3-dehydroquinate + phosphate. The protein operates within metabolic intermediate biosynthesis; chorismate biosynthesis; chorismate from D-erythrose 4-phosphate and phosphoenolpyruvate: step 2/7. In terms of biological role, catalyzes the conversion of 3-deoxy-D-arabino-heptulosonate 7-phosphate (DAHP) to dehydroquinate (DHQ). The sequence is that of 3-dehydroquinate synthase from Chlorobium chlorochromatii (strain CaD3).